The primary structure comprises 1035 residues: Translation initiation factor IF-2 (1035 aa).

Residues 56–66 (KDDKSNTDDNK) are compositionally biased toward basic and acidic residues. 2 disordered regions span residues 56–80 (KDDK…SSEA) and 114–402 (ANDA…VIKN). Residues 68–78 (ASAHSVAQHSS) are compositionally biased toward polar residues. Composition is skewed to basic and acidic residues over residues 114–137 (ANDA…RVET) and 146–200 (LVRE…EIKD). A compositionally biased stretch (polar residues) spans 219–228 (DSATNVNLNE). Over residues 229 to 238 (SIDKDKKTND) the composition is skewed to basic and acidic residues. Polar residues predominate over residues 239-253 (NRQVSTDNSAVNNEE). Positions 259–315 (LNKKDMDKKNNNKKNEAKKNAEKKNEAKKNEKNDNKGGNAKKNEHRSPDMKKNDSNR) are enriched in basic and acidic residues. The span at 316–325 (PQDANKQNSK) shows a compositional bias: polar residues. Composition is skewed to basic and acidic residues over residues 327 to 347 (AADK…EIPK) and 354 to 385 (QKEE…KEQP). One can recognise a tr-type G domain in the interval 537 to 706 (PRPPVVVVMG…LLAADMLELK (170 aa)). Positions 546 to 553 (GHVDHGKT) are G1. A GTP-binding site is contributed by 546 to 553 (GHVDHGKT). The G2 stretch occupies residues 571–575 (GITQH). The tract at residues 592–595 (DTPG) is G3. Residues 592–596 (DTPGH) and 646–649 (NKID) contribute to the GTP site. The interval 646-649 (NKID) is G4. A G5 region spans residues 682 to 684 (SAK).

Belongs to the TRAFAC class translation factor GTPase superfamily. Classic translation factor GTPase family. IF-2 subfamily.

It is found in the cytoplasm. In terms of biological role, one of the essential components for the initiation of protein synthesis. Protects formylmethionyl-tRNA from spontaneous hydrolysis and promotes its binding to the 30S ribosomal subunits. Also involved in the hydrolysis of GTP during the formation of the 70S ribosomal complex. The protein is Translation initiation factor IF-2 of Acetivibrio thermocellus (strain ATCC 27405 / DSM 1237 / JCM 9322 / NBRC 103400 / NCIMB 10682 / NRRL B-4536 / VPI 7372) (Clostridium thermocellum).